We begin with the raw amino-acid sequence, 221 residues long: Large ribosomal subunit protein uL3 (221 aa).

Belongs to the universal ribosomal protein uL3 family. As to quaternary structure, part of the 50S ribosomal subunit. Forms a cluster with proteins L14 and L19.

In terms of biological role, one of the primary rRNA binding proteins, it binds directly near the 3'-end of the 23S rRNA, where it nucleates assembly of the 50S subunit. The protein is Large ribosomal subunit protein uL3 of Chlamydia trachomatis serovar A (strain ATCC VR-571B / DSM 19440 / HAR-13).